A 302-amino-acid polypeptide reads, in one-letter code: Sulfate adenylyltransferase subunit 2 (302 aa).

The disordered stretch occupies residues 280–302 (RQGRLIDSDQSASMEQKKRQGYF).

The protein belongs to the PAPS reductase family. CysD subfamily. As to quaternary structure, heterodimer composed of CysD, the smaller subunit, and CysN.

The enzyme catalyses sulfate + ATP + H(+) = adenosine 5'-phosphosulfate + diphosphate. It functions in the pathway sulfur metabolism; hydrogen sulfide biosynthesis; sulfite from sulfate: step 1/3. With CysN forms the ATP sulfurylase (ATPS) that catalyzes the adenylation of sulfate producing adenosine 5'-phosphosulfate (APS) and diphosphate, the first enzymatic step in sulfur assimilation pathway. APS synthesis involves the formation of a high-energy phosphoric-sulfuric acid anhydride bond driven by GTP hydrolysis by CysN coupled to ATP hydrolysis by CysD. The polypeptide is Sulfate adenylyltransferase subunit 2 (Shewanella frigidimarina (strain NCIMB 400)).